A 406-amino-acid polypeptide reads, in one-letter code: Putative phosphate permease PH0640 (406 aa).

11 consecutive transmembrane segments (helical) span residues 2–22, 45–65, 83–103, 114–134, 140–160, 182–202, 207–227, 265–285, 288–308, 330–350, and 385–405; these read IPIDPWIILTLILGFGMAWAI, AVLIAGVLEFTGAYFFGKTVT, VLIYGSIAALLGATIWLIIAT, SIIGGIVGYGIIYGGIGIVNW, VVLSWVLSPIVGAIFAFLVFR, FWIGLAFIVIGTMFYIKVLHG, IGILKYGIPTGIIVFIITSML, VANAIGPVAAVYTIATMGLAG, VPVPRWILALGGLGIAIGVAT, FTIDFSAATVVLIASWLGMPI, and FVTVPVAGIIAGIIFKVLLLI.

It belongs to the inorganic phosphate transporter (PiT) (TC 2.A.20) family.

Its subcellular location is the cell membrane. In terms of biological role, potential transporter for phosphate. The polypeptide is Putative phosphate permease PH0640 (Pyrococcus horikoshii (strain ATCC 700860 / DSM 12428 / JCM 9974 / NBRC 100139 / OT-3)).